The following is a 250-amino-acid chain: MNTRASNFLAASFSTIMLVGAFSLPAFAQENQMTTQPARIAVTGEGMMTASPDMAILNLSVLRQAKTAREAMTANNEAMTKVLDAMKKAGIEDRDLQTGGINIQPIYVYPDDKNNLKEPTITGYSVSTSLTVRVRELANVGKILDESVTLGVNQGGDLNLVNDNPSAVINEARKRAVANAIAKAKTLADAAGVGLGRVVEISELSRPPMPMPIARGQFRTMLAAAPDNSVPIAAGENSYNVSVNVVFEIK.

Positions 1–28 (MNTRASNFLAASFSTIMLVGAFSLPAFA) are cleaved as a signal peptide.

It is found in the periplasm. In Brucella melitensis biotype 1 (strain ATCC 23456 / CCUG 17765 / NCTC 10094 / 16M), this protein is 26 kDa periplasmic immunogenic protein (bp26).